We begin with the raw amino-acid sequence, 338 residues long: DNA-directed RNA polymerase subunit alpha (338 aa).

The alpha N-terminal domain (alpha-NTD) stretch occupies residues 1-226 (MLIAQRPTLT…ELFGLTRELN (226 aa)). The interval 243–338 (YAESLGTPVE…DDDYAETEQY (96 aa)) is alpha C-terminal domain (alpha-CTD). Residues 319-338 (AAAEAYDEANDDDYAETEQY) are disordered. Positions 323–338 (AYDEANDDDYAETEQY) are enriched in acidic residues.

The protein belongs to the RNA polymerase alpha chain family. As to quaternary structure, homodimer. The RNAP catalytic core consists of 2 alpha, 1 beta, 1 beta' and 1 omega subunit. When a sigma factor is associated with the core the holoenzyme is formed, which can initiate transcription.

The catalysed reaction is RNA(n) + a ribonucleoside 5'-triphosphate = RNA(n+1) + diphosphate. Functionally, DNA-dependent RNA polymerase catalyzes the transcription of DNA into RNA using the four ribonucleoside triphosphates as substrates. The sequence is that of DNA-directed RNA polymerase subunit alpha from Cutibacterium acnes (strain DSM 16379 / KPA171202) (Propionibacterium acnes).